Reading from the N-terminus, the 407-residue chain is Protein ATC1/LIC4 (407 aa).

The protein resides in the cytoplasm. Its subcellular location is the nucleus. Its function is as follows. Involved in cation homeostasis and in the regulation of the cation stress signaling cascades. This is Protein ATC1/LIC4 (ATC1) from Eremothecium gossypii (strain ATCC 10895 / CBS 109.51 / FGSC 9923 / NRRL Y-1056) (Yeast).